Here is a 163-residue protein sequence, read N- to C-terminus: Crossover junction endodeoxyribonuclease RuvC (163 aa).

Residues Asp-9, Glu-76, and Asp-148 contribute to the active site. The Mg(2+) site is built by Asp-9, Glu-76, and Asp-148.

It belongs to the RuvC family. In terms of assembly, homodimer which binds Holliday junction (HJ) DNA. The HJ becomes 2-fold symmetrical on binding to RuvC with unstacked arms; it has a different conformation from HJ DNA in complex with RuvA. In the full resolvosome a probable DNA-RuvA(4)-RuvB(12)-RuvC(2) complex forms which resolves the HJ. Mg(2+) serves as cofactor.

It is found in the cytoplasm. The catalysed reaction is Endonucleolytic cleavage at a junction such as a reciprocal single-stranded crossover between two homologous DNA duplexes (Holliday junction).. Its function is as follows. The RuvA-RuvB-RuvC complex processes Holliday junction (HJ) DNA during genetic recombination and DNA repair. Endonuclease that resolves HJ intermediates. Cleaves cruciform DNA by making single-stranded nicks across the HJ at symmetrical positions within the homologous arms, yielding a 5'-phosphate and a 3'-hydroxyl group; requires a central core of homology in the junction. The consensus cleavage sequence is 5'-(A/T)TT(C/G)-3'. Cleavage occurs on the 3'-side of the TT dinucleotide at the point of strand exchange. HJ branch migration catalyzed by RuvA-RuvB allows RuvC to scan DNA until it finds its consensus sequence, where it cleaves and resolves the cruciform DNA. This Trichodesmium erythraeum (strain IMS101) protein is Crossover junction endodeoxyribonuclease RuvC.